A 379-amino-acid polypeptide reads, in one-letter code: MKNGMLALILAGGQGTRLGKLTQSIAKPAVQFGGRYRIIDFALSNCANSGIHNVGVITQYQPLALNNHIGNGSSWGLDGINSGATILQPYSATEGNRWFQGTSHAIYQNIDYIDSINPEYVLILSGDHIYKMDYDDMLQTHKANMASLTVAVIDVPLKEAGRFGIMNTDTNDRIVEFEEKPANPKSTKASMGIYIFNWQRLRTMLVDAEKNNIDMSDFGQHVIPSYLESGERVYTYNFKGYWKDVGTIESLWEANMEYIGEENALDSRDRSWKIYSKNHIAPPNFITEDAEVKDSLVVDGSFISGKVNHSILSTNVQVRKGAEVKDSFIMSDVIIGEGARITRAIIGEGAVIGDHVVIDGSKDVQVVGYNEVVGVPNED.

Residues glycine 164, 179 to 180 (EK), and serine 190 each bind alpha-D-glucose 1-phosphate.

This sequence belongs to the bacterial/plant glucose-1-phosphate adenylyltransferase family. In terms of assembly, homotetramer.

It catalyses the reaction alpha-D-glucose 1-phosphate + ATP + H(+) = ADP-alpha-D-glucose + diphosphate. It functions in the pathway glycan biosynthesis; glycogen biosynthesis. In terms of biological role, involved in the biosynthesis of ADP-glucose, a building block required for the elongation reactions to produce glycogen. Catalyzes the reaction between ATP and alpha-D-glucose 1-phosphate (G1P) to produce pyrophosphate and ADP-Glc. The sequence is that of Glucose-1-phosphate adenylyltransferase from Streptococcus equi subsp. zooepidemicus (strain H70).